The following is a 1058-amino-acid chain: Carbamoyl phosphate synthase large chain (1058 aa).

The tract at residues 1-401 (MPKRKDIQKI…SLLKACRSLE (401 aa)) is carboxyphosphate synthetic domain. 12 residues coordinate ATP: arginine 129, arginine 169, glycine 175, glycine 176, arginine 208, isoleucine 210, glutamate 215, glycine 241, isoleucine 242, histidine 243, glutamine 284, and glutamate 298. The ATP-grasp 1 domain maps to 133-327 (KQLMQELDQP…IAKLAAKIAV (195 aa)). Positions 284, 298, and 300 each coordinate Mg(2+). The Mn(2+) site is built by glutamine 284, glutamate 298, and asparagine 300. The tract at residues 402-546 (IGVCHNEMTS…YSTYELENES (145 aa)) is oligomerization domain. Residues 547-929 (VQSNKESILV…ALYKAFEANN (383 aa)) form a carbamoyl phosphate synthetic domain region. The ATP-grasp 2 domain maps to 671–861 (EKALKELGIP…MAQIATKLIL (191 aa)). The ATP site is built by arginine 707, serine 746, isoleucine 748, glutamate 752, glycine 777, valine 778, histidine 779, serine 780, glutamine 820, and glutamate 832. Glutamine 820, glutamate 832, and asparagine 834 together coordinate Mg(2+). Mn(2+)-binding residues include glutamine 820, glutamate 832, and asparagine 834. In terms of domain architecture, MGS-like spans 930–1058 (SHLSEFGQIV…ESRCFNIEAI (129 aa)). Residues 930–1058 (SHLSEFGQIV…ESRCFNIEAI (129 aa)) are allosteric domain.

This sequence belongs to the CarB family. As to quaternary structure, composed of two chains; the small (or glutamine) chain promotes the hydrolysis of glutamine to ammonia, which is used by the large (or ammonia) chain to synthesize carbamoyl phosphate. Tetramer of heterodimers (alpha,beta)4. It depends on Mg(2+) as a cofactor. Mn(2+) serves as cofactor.

The catalysed reaction is hydrogencarbonate + L-glutamine + 2 ATP + H2O = carbamoyl phosphate + L-glutamate + 2 ADP + phosphate + 2 H(+). It catalyses the reaction hydrogencarbonate + NH4(+) + 2 ATP = carbamoyl phosphate + 2 ADP + phosphate + 2 H(+). Its pathway is amino-acid biosynthesis; L-arginine biosynthesis; carbamoyl phosphate from bicarbonate: step 1/1. The protein operates within pyrimidine metabolism; UMP biosynthesis via de novo pathway; (S)-dihydroorotate from bicarbonate: step 1/3. Its function is as follows. Large subunit of the glutamine-dependent carbamoyl phosphate synthetase (CPSase). CPSase catalyzes the formation of carbamoyl phosphate from the ammonia moiety of glutamine, carbonate, and phosphate donated by ATP, constituting the first step of 2 biosynthetic pathways, one leading to arginine and/or urea and the other to pyrimidine nucleotides. The large subunit (synthetase) binds the substrates ammonia (free or transferred from glutamine from the small subunit), hydrogencarbonate and ATP and carries out an ATP-coupled ligase reaction, activating hydrogencarbonate by forming carboxy phosphate which reacts with ammonia to form carbamoyl phosphate. The chain is Carbamoyl phosphate synthase large chain from Streptococcus pyogenes serotype M18 (strain MGAS8232).